Reading from the N-terminus, the 191-residue chain is Thioredoxin F-type, chloroplastic (191 aa).

The 123-residue stretch at 68 to 190 (KASLETAVGA…LVAAIEAARS (123 aa)) folds into the Thioredoxin domain. Active-site nucleophile residues include Cys-115 and Cys-118. An intrachain disulfide couples Cys-115 to Cys-118.

The protein belongs to the thioredoxin family. Plant F-type subfamily. Forms a complex with heterodimeric ferredoxin-thioredoxin reductase (FTR) and ferredoxin.

It is found in the plastid. The protein localises to the chloroplast. Participates in various redox reactions through the reversible oxidation of the active center dithiol to a disulfide. The F form is known to activate a number of enzymes of the photosynthetic carbon cycle. In Mesembryanthemum crystallinum (Common ice plant), this protein is Thioredoxin F-type, chloroplastic.